The sequence spans 196 residues: MRPLDAKKDHYRKMAREQGYRSRAAYKLKELNKAYRIIGAGFTVLDLGCAPGSWMQVAASAAGNRGTVLGVDLEYAEELNHAESMRGDVEDESLAETVAERLGRADAVICDLSPQVSGNWSVDHARQISLNYAAARIMGRVLAPKGNAVFKVFDGEYAAEFREHMGHMFSKTKSTKPQASRKQSSELYLVCLGFRG.

Positions 52, 54, 72, 88, and 111 each coordinate S-adenosyl-L-methionine. K151 functions as the Proton acceptor in the catalytic mechanism.

This sequence belongs to the class I-like SAM-binding methyltransferase superfamily. RNA methyltransferase RlmE family.

Its subcellular location is the cytoplasm. The enzyme catalyses uridine(2552) in 23S rRNA + S-adenosyl-L-methionine = 2'-O-methyluridine(2552) in 23S rRNA + S-adenosyl-L-homocysteine + H(+). In terms of biological role, specifically methylates the uridine in position 2552 of 23S rRNA at the 2'-O position of the ribose in the fully assembled 50S ribosomal subunit. The chain is Ribosomal RNA large subunit methyltransferase E from Cenarchaeum symbiosum (strain A).